Consider the following 463-residue polypeptide: RuvB-like helicase 2 (463 aa).

76-83 (GPPSTGKT) contacts ATP.

Belongs to the RuvB family. In terms of assembly, may form heterododecamers with RVB1. Component of the SWR1 chromatin remodeling complex, the INO80 chromatin remodeling complex, and of the R2TP complex.

Its subcellular location is the nucleus. It catalyses the reaction ATP + H2O = ADP + phosphate + H(+). DNA helicase which participates in several chromatin remodeling complexes, including the SWR1 and the INO80 complexes. The SWR1 complex mediates the ATP-dependent exchange of histone H2A for the H2A variant HZT1 leading to transcriptional regulation of selected genes by chromatin remodeling. The INO80 complex remodels chromatin by shifting nucleosomes and is involved in DNA repair. Also involved in pre-rRNA processing. This chain is RuvB-like helicase 2 (RVB2), found in Cryptococcus neoformans var. neoformans serotype D (strain JEC21 / ATCC MYA-565) (Filobasidiella neoformans).